Here is a 131-residue protein sequence, read N- to C-terminus: Small ribosomal subunit protein uS9c (131 aa).

Belongs to the universal ribosomal protein uS9 family.

The protein localises to the plastid. Its subcellular location is the chloroplast. In Emiliania huxleyi (Coccolithophore), this protein is Small ribosomal subunit protein uS9c (rps9).